A 215-amino-acid polypeptide reads, in one-letter code: Glutathione S-transferase F9 (215 aa).

The GST N-terminal domain occupies 2–81; it reads VLKVYGPHFA…YVAEKYRSQG (80 aa). 11–12 contacts glutathione; the sequence is AS. Residue Ser12 is modified to Phosphoserine. Met35 is modified (methionine sulfoxide). Glutathione-binding positions include 39–40, 52–53, and 65–66; these read HK, TV, and ES. In terms of domain architecture, GST C-terminal spans 88–215; it reads TVEDRGQVEQ…ETVAKYSFPA (128 aa). Met118, Met123, and Met184 each carry methionine sulfoxide.

It belongs to the GST superfamily. Phi family. In terms of processing, oxidated at Met-35, Met-118, Met-123 and Met-184 in oxidative stress conditions (e.g. hydrogen peroxide H(2)O(2)).

It is found in the cytoplasm. The protein localises to the cytosol. The catalysed reaction is RX + glutathione = an S-substituted glutathione + a halide anion + H(+). With respect to regulation, redox-regulated enzyme; in oxidative stress conditions methionine oxidation ensure a thermodynamic and structural compensatory mechanism to guarantee H(2)O(2) peroxidase activity despite transferase activity inhibition. In vitro, possesses glutathione S-transferase activity toward 1-chloro-2,4-dinitrobenzene (CDNB) and benzyl isothiocyanate (BITC), and glutathione peroxidase activity toward cumene hydroperoxide and linoleic acid-13-hydroperoxide. May be involved in the conjugation of reduced glutathione to a wide number of exogenous and endogenous hydrophobic electrophiles and have a detoxification role against certain herbicides. In Arabidopsis thaliana (Mouse-ear cress), this protein is Glutathione S-transferase F9.